Here is a 179-residue protein sequence, read N- to C-terminus: MAKLHDYYKDEVVKQLMSQFDYNSVMQVPRVEKITLNMGVGEAIADKKLLDNAAADLAAISGQKPFITKARKSVAGFKIRQGYPIGCKVTLRGERMWEFFERLISIAVPRIRDFRGLSAKSFDGRGNYSMGVREQIIFPEIDYDKVDRVRGLDITITTTAKSDDEGRALLAAFNFPFRK.

Belongs to the universal ribosomal protein uL5 family. As to quaternary structure, part of the 50S ribosomal subunit; part of the 5S rRNA/L5/L18/L25 subcomplex. Contacts the 5S rRNA and the P site tRNA. Forms a bridge to the 30S subunit in the 70S ribosome.

Functionally, this is one of the proteins that bind and probably mediate the attachment of the 5S RNA into the large ribosomal subunit, where it forms part of the central protuberance. In the 70S ribosome it contacts protein S13 of the 30S subunit (bridge B1b), connecting the 2 subunits; this bridge is implicated in subunit movement. Contacts the P site tRNA; the 5S rRNA and some of its associated proteins might help stabilize positioning of ribosome-bound tRNAs. This is Large ribosomal subunit protein uL5 from Serratia proteamaculans (strain 568).